The primary structure comprises 480 residues: MGLVIYDTLARRKVPFEPAVPGHVGIYVCGPTVYADPHLGHARGPVVYDVLRRYLLHKGYKVRFVSNITDVGHLTDDADEGEDKIVRRAKLERLEPMEVAEKYTWSYFDAMQALNVLRPSIAPRASGHIPEMLELTERLLARGVAYERKGSVYFRVRSFPEYGKLSGKRLEELRAGARVEVREEKEDPLDFALWKAAEPGHIMRWKSPWGEGYPGWHIECTAMSLKYLGEGFDLHAGGIDLQFPHHECEIAQAEAAGFRFARHWMHHNHVLLEGEKMAKSTGNLVLLHDLLEAHEPMALRFYLLQTHYRSPMDFTWEGLESAKRGYGRLLHAYREVRGRKKTAPPGTTPELERALDALEKAFMEAIEDDLSTPEALAALFAFLPELHKLLPEAKAESLARAEAVFHTLGEGILGLFPERVLEERVSGPLLEGLIALLLELREEARRAKDYEKSDLIRERLRALGVIVEDTKEGPRWRLER.

Zn(2+) is bound at residue Cys29. A 'HIGH' region motif is present at residues 31-41 (PTVYADPHLGH). Positions 220, 245, and 249 each coordinate Zn(2+). Residues 276-280 (KMAKS) carry the 'KMSKS' region motif. Lys279 lines the ATP pocket.

The protein belongs to the class-I aminoacyl-tRNA synthetase family. As to quaternary structure, monomer. It depends on Zn(2+) as a cofactor.

The protein resides in the cytoplasm. It catalyses the reaction tRNA(Cys) + L-cysteine + ATP = L-cysteinyl-tRNA(Cys) + AMP + diphosphate. The protein is Cysteine--tRNA ligase of Thermus thermophilus (strain ATCC 27634 / DSM 579 / HB8).